The primary structure comprises 480 residues: Uridine 5'-monophosphate synthase (480 aa).

A2 bears the N-acetylalanine mark. Positions A2 to S214 are OPRTase. At Y37 the chain carries Phosphotyrosine. S214 bears the Phosphoserine mark. The domain linker stretch occupies residues L215 to K220. Residues E221 to V480 are OMPdecase. Position 257 (S257) interacts with orotidine 5'-phosphate. Residues S257, D259, and K281 to H283 contribute to the UMP site. Orotidine 5'-phosphate-binding positions include K281, K314, D317, T321, S372, Q430–Y432, and G450–R451. Catalysis depends on for OMPdecase activity residues K314 and D317. Residues D317, T321, S372, Q430–Y432, and G450–R451 contribute to the UMP site.

It in the N-terminal section; belongs to the purine/pyrimidine phosphoribosyltransferase family. In the C-terminal section; belongs to the OMP decarboxylase family. As to quaternary structure, homodimer; dimerization is required for enzymatic activity.

It catalyses the reaction orotidine 5'-phosphate + diphosphate = orotate + 5-phospho-alpha-D-ribose 1-diphosphate. The enzyme catalyses orotidine 5'-phosphate + H(+) = UMP + CO2. The protein operates within pyrimidine metabolism; UMP biosynthesis via de novo pathway; UMP from orotate: step 1/2. Its pathway is pyrimidine metabolism; UMP biosynthesis via de novo pathway; UMP from orotate: step 2/2. Functionally, bifunctional enzyme catalyzing the last two steps of de novo pyrimidine biosynthesis, orotate phosphoribosyltransferase (OPRT), which converts orotate to orotidine-5'-monophosphate (OMP), and orotidine-5'-monophosphate decarboxylase (ODC), the terminal enzymatic reaction that decarboxylates OMP to uridine monophosphate (UMP). The chain is Uridine 5'-monophosphate synthase (UMPS) from Bos taurus (Bovine).